The primary structure comprises 483 residues: M protein, serotype 6 (483 aa).

Residues 1–42 form the signal peptide; the sequence is MAKNNTNRHYSLRKLKKGTASVAVALSVIGAGLVVNTNEVSA. Residues 54–171 adopt a coiled-coil conformation; sequence DKARELLNKY…IGTLKKTLDE (118 aa). Repeat copies occupy residues 69–75, 76–82, 83–89, 90–96, 97–103, 104–110, 111–117, and 118–124. Positions 69–138 are 10 X 7 AA approximate tandem repeats of [KMNR]-L-[TQ]-[TDA]-[ENQ]-N-[NDK]; the sequence is MLQANNDKLT…EENRLTTENK (70 aa). Positions 74 to 87 are enriched in polar residues; the sequence is NDKLTTENNNLTDQ. The tract at residues 74–157 is disordered; it reads NDKLTTENNN…EEEAANKERE (84 aa). The span at 88–113 shows a compositional bias: low complexity; it reads NKNLTTENKNLTDQNKNLTTENKNLT. 2 stretches are compositionally biased toward basic and acidic residues: residues 122-135 and 143-157; these read ENKELKAEENRLTT and KLSEAEEEAANKERE. A 9-1; approximate repeat occupies 125-131; it reads ELKAEEN. Repeat copies occupy residues 132–138, 157–181, 182–206, 207–231, and 232–256. The interval 157–269 is 4.5 X 25 AA tandem repeats of E-[NS]-K-E-[TA]-I-G-T-L-K-K-[TI]-L-D-E-T-V-K-D-K-I-A-[KR]-E-Q; it reads ENKEAIGTLK…QDIGALKQEL (113 aa). Disordered stretches follow at residues 255–298 and 314–345; these read EQKS…EAKK and VKEEKQISDASRQGLRRDLDASREAKKQVEKA. A 5-2; truncated repeat occupies 257 to 269; the sequence is KSKQDIGALKQEL. 2 stretches are compositionally biased toward basic and acidic residues: residues 268 to 298 and 328 to 345; these read ELAKKDEGNKVSEASRKGLRRDLDASREAKK and LRRDLDASREAKKQVEKA. 2 C repeats span residues 270–304 and 312–346; these read AKKDEGNKVSEASRKGLRRDLDASREAKKQVEKDL and DKVKEEKQISDASRQGLRRDLDASREAKKQVEKAL. Positions 279–347 are binding to CD46; it reads SEASRKGLRR…AKKQVEKALE (69 aa). The tract at residues 279–347 is two directly repeated 27 amino acid blocks separated by 15 amino acids; sequence SEASRKGLRR…AKKQVEKALE (69 aa). A coiled-coil region spans residues 280-408; sequence EASRKGLRRD…LAKLRAGKAS (129 aa). The segment at 348–411 is hydrophilic; sequence EANSKLAALE…LRAGKASDSQ (64 aa). D repeat units follow at residues 379 to 384, 385 to 390, 393 to 398, and 400 to 405; these read AKLEAE, AKALKE, AKQAEE, and AKLRAG. Positions 400–455 are disordered; that stretch reads AKLRAGKASDSQTPDAKPGNKVVPGKGQAPQAGTKPNQNKAPMKETKRQLPSTGET. The LPXTG sorting signal signature appears at 449–453; the sequence is LPSTG. T452 bears the Pentaglycyl murein peptidoglycan amidated threonine mark. Positions 453-483 are cleaved as a propeptide — removed by sortase; sequence GETANPFFTAAALTVMATAGVAAVVKRKEEN.

Belongs to the M protein family.

It is found in the secreted. Its subcellular location is the cell wall. In terms of biological role, mediates the attachment of S.pyogenes to skin epithelial cells through the binding of the human membrane cofactor protein CD46. Also binds to the factor H and factor H-like protein 1. These interactions could contribute to the fact that the M6 protein protects the bacterium from the phagocytosis by regulating the complement activation on the bacterial surface. The protein is M protein, serotype 6 (emm6) of Streptococcus pyogenes.